The sequence spans 402 residues: Multidrug resistance protein MdtH (402 aa).

The Cytoplasmic segment spans residues 1-12 (MSRVSQARNLGK). A helical membrane pass occupies residues 13–33 (YFLLIDNMLVVLGFFVVFPLI). At 34 to 98 (SIRFVDQMGW…GFATMGIAHE (65 aa)) the chain is on the periplasmic side. Residues 99 to 116 (PWLLWFSCLLSGLGGTLF) form a helical membrane-spanning segment. Topologically, residues 117–138 (DPPRSALVVKLIRPQQRGRFFS) are cytoplasmic. The chain crosses the membrane as a helical span at residues 139–159 (LLMMQDSAGAVIGALLGSWLL). The Periplasmic portion of the chain corresponds to 160–164 (QYDFR). A helical transmembrane segment spans residues 165-185 (LVCATGAVLFVLCAAFNAWLL). The Cytoplasmic portion of the chain corresponds to 186–213 (PAWKLSTVRTPVREGMTRVMRDKRFVTY). Residues 214–234 (VLTLAGYYMLAVQVMLMLPIM) form a helical membrane-spanning segment. Over 235–243 (VNDVAGAPS) the chain is Periplasmic. Residues 244–264 (AVKWMYAIEACLSLTLLYPIA) traverse the membrane as a helical segment. At 265-276 (RWSEKHFRLEHR) the chain is on the cytoplasmic side. Residues 277-297 (LMAGLLIMSLSMMPVGMVSGL) traverse the membrane as a helical segment. Residues 298–299 (QQ) are Periplasmic-facing. Residues 300-320 (LFTLICLFYIGSIIAEPARET) form a helical membrane-spanning segment. The Cytoplasmic portion of the chain corresponds to 321–339 (LSASLADARARGSYMGFSR). Residues 340–360 (LGLAIGGAIGYIGGGWLFDLG) form a helical membrane-spanning segment. Residues 361–367 (KSAHQPE) are Periplasmic-facing. The helical transmembrane segment at 368-388 (LPWMMLGIIGIFTFLALGWQF) threads the bilayer. The Cytoplasmic segment spans residues 389 to 402 (SQKRAARRLLERDA).

Belongs to the major facilitator superfamily. DHA1 family. MdtH (TC 2.A.1.2.21) subfamily.

It localises to the cell inner membrane. Confers resistance to norfloxacin and enoxacin. This chain is Multidrug resistance protein MdtH, found in Escherichia coli O139:H28 (strain E24377A / ETEC).